A 445-amino-acid polypeptide reads, in one-letter code: Exodeoxyribonuclease 7 large subunit (445 aa).

It belongs to the XseA family. Heterooligomer composed of large and small subunits.

It localises to the cytoplasm. The catalysed reaction is Exonucleolytic cleavage in either 5'- to 3'- or 3'- to 5'-direction to yield nucleoside 5'-phosphates.. In terms of biological role, bidirectionally degrades single-stranded DNA into large acid-insoluble oligonucleotides, which are then degraded further into small acid-soluble oligonucleotides. This Xanthomonas oryzae pv. oryzae (strain PXO99A) protein is Exodeoxyribonuclease 7 large subunit.